We begin with the raw amino-acid sequence, 202 residues long: Ribonuclease HII (202 aa).

The region spanning 12 to 201 (LLIAGVDEAG…VRQLKLFIPE (190 aa)) is the RNase H type-2 domain. A divalent metal cation contacts are provided by Asp-18, Glu-19, and Asp-110.

The protein belongs to the RNase HII family. Mn(2+) is required as a cofactor. Requires Mg(2+) as cofactor.

The protein localises to the cytoplasm. It catalyses the reaction Endonucleolytic cleavage to 5'-phosphomonoester.. In terms of biological role, endonuclease that specifically degrades the RNA of RNA-DNA hybrids. The chain is Ribonuclease HII from Coxiella burnetii (strain CbuG_Q212) (Coxiella burnetii (strain Q212)).